The chain runs to 142 residues: Transcriptional regulator MraZ (142 aa).

SpoVT-AbrB domains follow at residues 5-51 (ASAL…PRPE) and 77-120 (AADV…DAAT).

This sequence belongs to the MraZ family. Forms oligomers.

It is found in the cytoplasm. Its subcellular location is the nucleoid. This is Transcriptional regulator MraZ from Ralstonia nicotianae (strain ATCC BAA-1114 / GMI1000) (Ralstonia solanacearum).